The primary structure comprises 775 residues: MTEPDVEISSVLTGEDTLVLASMDTPAEIELVMDWLCQQRNRNPDIKFDVLKLPSRNLAPAALTALVEQLESDEDRSVVPVRVFWMPPAERSKLAKLAGLLPGRDPYHPNRRQQRHILKTDARRALVIAGDSAKVSELRQYWRDTTVGENECDFAQFVTRRAILAMERAESRILGPQYKSPRLVKPEILASTRFRAGLEKISGATVEEAGKMLDELATGWSRASVDLVSVLGRMLSRGFEPEIDYDEYQVAAMRAALEAHPAVLLFSHRSYIDGAVVPVAMQENRLPPVHVFAGINLSFGLMGPLLRRSGVIFIRRNIGDNPLYKYVLREYVGYIVEKRFNLSWSIEGTRSRTGKMLPPKLGLLTYVADAYLDGRSEDILLQPVSISFDQLHETAEYAAYARGGEKTPEGVAWLYSFIKAQGERNYGKIYVRFPEAVSMRQYLGAPHGALVQDQDAKRLALQKMSFEVAWRILCATPVTATALVSALLLTTRGVALTLDQLHHTLQESLDYLERKQTPVSKSALRLRSREGVRAAVDALSSGHPITRVDSGREPVWYITPGNEHAAAFYRNSVIHAFLETSIVELALAHARHVEGDRMKVFWAQAMRLRDLLKFDFYFADSAAFRANIAEEIAWHQNWEDRVSGDGDDIDAMLLTKRPLISDAMLRVFFEAYDIVADVLRDAPADVGQKELTELALGVGRQYVAQGRVRSGESVSTLLFATAYQVVVDQNLIAPAPDLAERRMVFRRELRDIRRDFDYVEQIARSRFIVREFKSR.

The HXXXXD motif signature appears at 268-273 (HRSYID).

This sequence belongs to the GPAT/DAPAT family.

The protein localises to the cell membrane. The enzyme catalyses sn-glycerol 3-phosphate + an acyl-CoA = a 1-acyl-sn-glycero-3-phosphate + CoA. It functions in the pathway phospholipid metabolism; CDP-diacylglycerol biosynthesis; CDP-diacylglycerol from sn-glycerol 3-phosphate: step 1/3. In Mycobacterium leprae (strain TN), this protein is Glycerol-3-phosphate acyltransferase (plsB).